The following is a 611-amino-acid chain: Glutathione hydrolase proenzyme 2 (611 aa).

At 1–42 (MSPTDTTPLLYSWDDQSRHQDPDWHKLRNYHGAWYRRISRRR) the chain is on the cytoplasmic side. A helical; Signal-anchor for type II membrane protein transmembrane segment spans residues 43–63 (FSQFIFAFGLMTLFVLVYSIS). Residues 64 to 611 (SNLHTPTQFT…PRKYGQAAAY (548 aa)) are Lumenal-facing. N138 carries N-linked (GlcNAc...) asparagine glycosylation. L-glutamate is bound at residue R147. N-linked (GlcNAc...) asparagine glycans are attached at residues N153, N297, and N396. The Nucleophile role is filled by T420. Residues T438, N440, Q459, D462, 490-491 (SS), and 512-513 (GG) each bind L-glutamate.

It belongs to the gamma-glutamyltransferase family. In terms of assembly, heterodimer composed of the light and heavy chains. The active site is located in the light chain. Post-translationally, cleaved by autocatalysis into a large and a small subunit.

The protein localises to the vacuole membrane. It carries out the reaction an N-terminal (5-L-glutamyl)-[peptide] + an alpha-amino acid = 5-L-glutamyl amino acid + an N-terminal L-alpha-aminoacyl-[peptide]. It catalyses the reaction glutathione + H2O = L-cysteinylglycine + L-glutamate. The catalysed reaction is an S-substituted glutathione + H2O = an S-substituted L-cysteinylglycine + L-glutamate. The protein operates within sulfur metabolism; glutathione metabolism. Its function is as follows. Catalyzes the transfer of the gamma-glutamyl moiety of glutathione (GSH) and other gamma-glutamyl compounds to amino acids and peptides. Major GSH-degrading enzyme, catalyzing the hydrolytic release of L-glutamate from GSH. Plays a role in the turnover of the vacuolar GSH, serving as an alternative nitrogen source during nitrogen starvation. The chain is Glutathione hydrolase proenzyme 2 (ggt2) from Schizosaccharomyces pombe (strain 972 / ATCC 24843) (Fission yeast).